We begin with the raw amino-acid sequence, 444 residues long: Proline--tRNA ligase (444 aa).

This sequence belongs to the class-II aminoacyl-tRNA synthetase family. ProS type 2 subfamily. In terms of assembly, homodimer.

It is found in the cytoplasm. The enzyme catalyses tRNA(Pro) + L-proline + ATP = L-prolyl-tRNA(Pro) + AMP + diphosphate. In terms of biological role, catalyzes the attachment of proline to tRNA(Pro) in a two-step reaction: proline is first activated by ATP to form Pro-AMP and then transferred to the acceptor end of tRNA(Pro). The chain is Proline--tRNA ligase from Maricaulis maris (strain MCS10) (Caulobacter maris).